The chain runs to 47 residues: uncharacterized protein (47 aa).

This is an uncharacterized protein from Treponema pallidum (strain Nichols).